Reading from the N-terminus, the 311-residue chain is 4-hydroxy-tetrahydrodipicolinate synthase (311 aa).

Residue T51 participates in pyruvate binding. Catalysis depends on Y140, which acts as the Proton donor/acceptor. The active-site Schiff-base intermediate with substrate is the K168. I209 contributes to the pyruvate binding site.

Belongs to the DapA family. As to quaternary structure, homotetramer; dimer of dimers.

It is found in the cytoplasm. It catalyses the reaction L-aspartate 4-semialdehyde + pyruvate = (2S,4S)-4-hydroxy-2,3,4,5-tetrahydrodipicolinate + H2O + H(+). It participates in amino-acid biosynthesis; L-lysine biosynthesis via DAP pathway; (S)-tetrahydrodipicolinate from L-aspartate: step 3/4. Functionally, catalyzes the condensation of (S)-aspartate-beta-semialdehyde [(S)-ASA] and pyruvate to 4-hydroxy-tetrahydrodipicolinate (HTPA). The chain is 4-hydroxy-tetrahydrodipicolinate synthase from Streptococcus pneumoniae (strain Taiwan19F-14).